The chain runs to 74 residues: Protein SspS (74 aa).

This sequence belongs to the alpha/beta-type SASP family.

This is Protein SspS (sspS) from Streptococcus pyogenes.